A 253-amino-acid chain; its full sequence is uncharacterized protein (253 aa).

The NADP(+) site is built by I17, S36, D62, N89, Y158, K162, V191, and T193. The active-site Proton donor is the Y158. Residue K162 is the Lowers pKa of active site Tyr of the active site.

Belongs to the short-chain dehydrogenases/reductases (SDR) family.

Its subcellular location is the cytoplasm. It is found in the nucleus. This is an uncharacterized protein from Schizosaccharomyces pombe (strain 972 / ATCC 24843) (Fission yeast).